Consider the following 131-residue polypeptide: RutC family protein YjgH (131 aa).

This sequence belongs to the RutC family.

The protein is RutC family protein YjgH (yjgH) of Escherichia coli (strain K12).